The following is a 71-amino-acid chain: Brevinin-1SN2 (71 aa).

The signal sequence occupies residues 1 to 22; sequence MFTMKKSLLLIFFLGTINLSLC. Residues 23–45 constitute a propeptide, removed in mature form; that stretch reads EEERNADEDEKRDGDDESDVEVQ. Cysteines 65 and 71 form a disulfide.

Belongs to the frog skin active peptide (FSAP) family. Brevinin subfamily. Expressed by the skin glands.

The protein resides in the secreted. In terms of biological role, antimicrobial peptide. Active against a variety of Gram-negative and Gram-positive bacterial strains. Active against fungus C.glabrata 090902 and C.albicans ATCC 10231. Shows hemolytic activity against human erythrocytes. The protein is Brevinin-1SN2 of Sylvirana spinulosa (Fine-spined frog).